Consider the following 315-residue polypeptide: MNYLDFESKIKEIEDKITSLSHVFEDEKTEVEIKKLSKKRLELMESTYSKLTDWQVVQLSRHPDRPYFKDLLPLIFTDFQELHGDRTFGDDLAVIGGLAKLNNKPVMVIGQEKGRDTKSKIKHNFGMMHPEGYRKALRLMKLAEKFNMPVVTFIDTPGAYPGIKAEERGQSEAIARNLLEMSALKVPVVCIVIGEGCSGGALGIGVGDRLLMLQYSYFATISPEGCASILHKTAEKASEVTQMMNITSGRLKELKIVDEVIPEPLGGAHRDYETTATNIRKAVAAELKILSEMTVEQRNSRRYDKLMSFGRFKEA.

In terms of domain architecture, CoA carboxyltransferase C-terminal spans 36–289 (LSKKRLELME…RKAVAAELKI (254 aa)).

The protein belongs to the AccA family. As to quaternary structure, acetyl-CoA carboxylase is a heterohexamer composed of biotin carboxyl carrier protein (AccB), biotin carboxylase (AccC) and two subunits each of ACCase subunit alpha (AccA) and ACCase subunit beta (AccD).

The protein resides in the cytoplasm. It carries out the reaction N(6)-carboxybiotinyl-L-lysyl-[protein] + acetyl-CoA = N(6)-biotinyl-L-lysyl-[protein] + malonyl-CoA. The protein operates within lipid metabolism; malonyl-CoA biosynthesis; malonyl-CoA from acetyl-CoA: step 1/1. In terms of biological role, component of the acetyl coenzyme A carboxylase (ACC) complex. First, biotin carboxylase catalyzes the carboxylation of biotin on its carrier protein (BCCP) and then the CO(2) group is transferred by the carboxyltransferase to acetyl-CoA to form malonyl-CoA. The protein is Acetyl-coenzyme A carboxylase carboxyl transferase subunit alpha of Francisella tularensis subsp. tularensis (strain FSC 198).